The sequence spans 469 residues: Asparagine--tRNA ligase (469 aa).

The protein belongs to the class-II aminoacyl-tRNA synthetase family. Homodimer.

It is found in the cytoplasm. The catalysed reaction is tRNA(Asn) + L-asparagine + ATP = L-asparaginyl-tRNA(Asn) + AMP + diphosphate + H(+). The sequence is that of Asparagine--tRNA ligase from Porphyromonas gingivalis (strain ATCC 33277 / DSM 20709 / CIP 103683 / JCM 12257 / NCTC 11834 / 2561).